The chain runs to 179 residues: Trypsin inhibitor (179 aa).

Q1 carries the pyrrolidone carboxylic acid modification. Cystine bridges form between C40/C85 and C132/C143.

Belongs to the protease inhibitor I3 (leguminous Kunitz-type inhibitor) family. As to quaternary structure, heterodimer of an alpha and a beta chain linked by a disulfide bond. As to expression, abundant in dry seeds.

It is found in the secreted. Functionally, inhibits trypsin, plasmin, human plasma kallikrein, chymotrypsin and factor XIIa activity. The polypeptide is Trypsin inhibitor (Leucaena leucocephala (White popinac)).